Reading from the N-terminus, the 258-residue chain is Glucanase inhibitor protein 1 (258 aa).

A signal peptide spans 1–19; sequence MRVVPTLAAASLALGAVAG. Residues 27 to 254 form the Peptidase S1 domain; the sequence is ILGGGEVPIG…AIEWITSVTK (228 aa). Residues cysteine 54 and cysteine 70 are joined by a disulfide bond. 5 N-linked (GlcNAc...) asparagine glycosylation sites follow: asparagine 87, asparagine 102, asparagine 107, asparagine 157, and asparagine 185. 2 disulfide bridges follow: cysteine 177–cysteine 189 and cysteine 199–cysteine 230.

It belongs to the peptidase S1 family. In terms of assembly, forms an apoplastic complex with host endoglucanases in tomato leaves during P.infestans infection.

It localises to the secreted. Functionally, secreted effector that suppresses host plant glucan elicitor-mediated defense responses. Targets host endoglucanases and inhibits the endoglucanase-mediated release of elicitor-active glucan oligosaccharides from P.infestans cell walls. The polypeptide is Glucanase inhibitor protein 1 (Phytophthora infestans (Potato late blight agent)).